Consider the following 571-residue polypeptide: Chaperonin GroEL 1 (571 aa).

ATP is bound by residues 29 to 32, Lys-50, 86 to 90, Gly-416, and Asp-498; these read TLGP and DGTTT.

Belongs to the chaperonin (HSP60) family. In terms of assembly, forms a cylinder of 14 subunits composed of two heptameric rings stacked back-to-back. Interacts with the co-chaperonin GroES.

The protein localises to the cytoplasm. It catalyses the reaction ATP + H2O + a folded polypeptide = ADP + phosphate + an unfolded polypeptide.. Functionally, together with its co-chaperonin GroES, plays an essential role in assisting protein folding. The GroEL-GroES system forms a nano-cage that allows encapsulation of the non-native substrate proteins and provides a physical environment optimized to promote and accelerate protein folding. This Rhodopirellula baltica (strain DSM 10527 / NCIMB 13988 / SH1) protein is Chaperonin GroEL 1.